We begin with the raw amino-acid sequence, 433 residues long: SPI-2 type 3 secretion system ATPase (433 aa).

165 to 170 (GVGKST) is a binding site for ATP.

Belongs to the ATPase alpha/beta chains family. T3SS ATPase subfamily. As to quaternary structure, the core secretion machinery of the T3SS is composed of approximately 20 different proteins, including cytoplasmic components, a base, an export apparatus and a needle. This subunit is part of the cytosolic complex. Forms homohexamers. Forms a complex with SsaK/SctL (stator protein) and SsaQ/SctQ (the major sorting platform component). Interacts with the T3SS-2 specific chaperones SsaE, SseA, SscA, SscB, and SrcA.

It localises to the cytoplasm. The catalysed reaction is ATP + H2O + cellular proteinSide 1 = ADP + phosphate + cellular proteinSide 2.. Its function is as follows. ATPase component of the type III secretion system (T3SS), also called injectisome, which is used to inject bacterial effector proteins into eukaryotic host cells. Acts as a molecular motor to provide the energy that is required for the export of proteins. Required for type III secretion apparatus (T3SA) formation, secretion of a subset of SPI-2 effectors and virulence. May play a critical role in T3SS substrate recognition, disassembly of the effector/chaperone complex and unfolding of the effector in an ATP-dependent manner prior to secretion. Releases the effector protein SseB from the T3SS-2 specific chaperone SsaE in an ATP-dependent manner. This is SPI-2 type 3 secretion system ATPase from Salmonella typhimurium (strain LT2 / SGSC1412 / ATCC 700720).